We begin with the raw amino-acid sequence, 271 residues long: Ribosomal RNA small subunit methyltransferase I (271 aa).

The protein belongs to the methyltransferase superfamily. RsmI family.

The protein localises to the cytoplasm. It carries out the reaction cytidine(1402) in 16S rRNA + S-adenosyl-L-methionine = 2'-O-methylcytidine(1402) in 16S rRNA + S-adenosyl-L-homocysteine + H(+). In terms of biological role, catalyzes the 2'-O-methylation of the ribose of cytidine 1402 (C1402) in 16S rRNA. This is Ribosomal RNA small subunit methyltransferase I from Campylobacter fetus subsp. fetus (strain 82-40).